A 233-amino-acid chain; its full sequence is MFQVQTAGTRTGTSSPDTTTSEAGLGSTPPMPDFDKQSYWHQRFESETAFEWLIPSSTFMPLLEAFLNKLPGSDARILHLGFGTSDLQVQLRTRGFVNITNVDYEPLAIERGRHLEMTAFGDVTMQYITADATNLASVPEISSQKYHLVVDKSTADAISCAGDDAVLAMAQGIHRSLADDGVWISVSYSAFRYDSPQLPFDVEVIARIPTAKARATDPDIYHYCYLLRPKPKV.

The disordered stretch occupies residues 1-32 (MFQVQTAGTRTGTSSPDTTTSEAGLGSTPPMP). Positions 9–21 (TRTGTSSPDTTTS) are enriched in low complexity. The S-adenosyl-L-methionine site is built by tryptophan 40, tryptophan 52, and glycine 81. Positions 140 to 146 (EISSQKY) match the Required for methyltransferase activity motif.

It belongs to the methyltransferase superfamily.

Methyltransferase; part of the gene cluster that mediates the biosynthesis of sordarial, a salicylic aldehyde structurally related to the phytotoxin pyriculol. The most interesting aspect of this pathway is formation of an aromatic product from the highly reducing polyketide synthase srdA. SrdA synthesizes a reduced polyketide chain from one molecule of acetyl-CoA and five molecules of malonyl-CoA. The polyketide chain is then reductively released as an aldehyde. The oxidoreductases srdC, srdD and srdE then oxidize one of the hydroxy groups to facilitate the intramolecular aldol condensation, followed by dehydration to yield a salicylic aldehyde. This aldehyde can undergo facile reduction by endogenous reductases to yield the alcohol 1-hydroxy-2-hydroxymethyl-3-pent-1,3-dienylbenzene. The flavin-dependent srdI counteract against the propensity of the aldehydes to be reduced under physiological conditions and is responsible for reoxidizing 1-hydroxy-2-hydroxymethyl-3-pent-1,3-dienylbenzene back to the salicylic aldehyde. This salicylic aldehyde is then selectively epoxidized by the cupin-domain-containing oxidoreductase srdB to yield the epoxide, which can be hydrolyzed stereoselectively by the hydrolase srdG to give the final product sordarial. This Neurospora crassa (strain ATCC 24698 / 74-OR23-1A / CBS 708.71 / DSM 1257 / FGSC 987) protein is Methyltransferase srdJ.